Consider the following 217-residue polypeptide: Twisted gastrulation protein homolog 1-A (217 aa).

The first 26 residues, 1–26 (MRPALFLCPVLISVLFLLSSLSLISG), serve as a signal peptide directing secretion. 2 N-linked (GlcNAc...) asparagine glycosylation sites follow: Asn-53 and Asn-147.

The protein belongs to the twisted gastrulation protein family.

The protein resides in the secreted. Its function is as follows. Involved in dorsal-ventral patterning. Appears to function predominantly as a ventralizing factor, through its actions as a BMP signaling agonist, acting through both chd-dependent and chd-independent mechanisms. May also antagonize BMP signaling, probably via formation of ternary complexes with chd and BMPs, resulting in dorsalization. The protein is Twisted gastrulation protein homolog 1-A (twsg1a) of Danio rerio (Zebrafish).